Consider the following 72-residue polypeptide: MIIPWQDLDPETLDNLIESFVLREGTDYGEHERSLADKVADVKQQLKRGEAVLVWSELHETVNIMPRALFNG.

Belongs to the UPF0270 family.

This chain is UPF0270 protein KPK_0377, found in Klebsiella pneumoniae (strain 342).